Here is a 131-residue protein sequence, read N- to C-terminus: Holo-[acyl-carrier-protein] synthase (131 aa).

Residues Asp-8 and Glu-63 each coordinate Mg(2+).

The protein belongs to the P-Pant transferase superfamily. AcpS family. Mg(2+) is required as a cofactor.

The protein localises to the cytoplasm. It carries out the reaction apo-[ACP] + CoA = holo-[ACP] + adenosine 3',5'-bisphosphate + H(+). Functionally, transfers the 4'-phosphopantetheine moiety from coenzyme A to a Ser of acyl-carrier-protein. This Shewanella pealeana (strain ATCC 700345 / ANG-SQ1) protein is Holo-[acyl-carrier-protein] synthase.